A 384-amino-acid chain; its full sequence is 4-hydroxy-3-methylbut-2-en-1-yl diphosphate synthase (flavodoxin) 1 (384 aa).

Residues Cys-281, Cys-284, Cys-316, and Glu-323 each coordinate [4Fe-4S] cluster.

This sequence belongs to the IspG family. It depends on [4Fe-4S] cluster as a cofactor.

The enzyme catalyses (2E)-4-hydroxy-3-methylbut-2-enyl diphosphate + oxidized [flavodoxin] + H2O + 2 H(+) = 2-C-methyl-D-erythritol 2,4-cyclic diphosphate + reduced [flavodoxin]. Its pathway is isoprenoid biosynthesis; isopentenyl diphosphate biosynthesis via DXP pathway; isopentenyl diphosphate from 1-deoxy-D-xylulose 5-phosphate: step 5/6. In terms of biological role, converts 2C-methyl-D-erythritol 2,4-cyclodiphosphate (ME-2,4cPP) into 1-hydroxy-2-methyl-2-(E)-butenyl 4-diphosphate. In Streptomyces coelicolor (strain ATCC BAA-471 / A3(2) / M145), this protein is 4-hydroxy-3-methylbut-2-en-1-yl diphosphate synthase (flavodoxin) 1.